The primary structure comprises 411 residues: Protein-lysine 6-oxidase (411 aa).

A signal peptide spans methionine 1–cysteine 21. The propeptide at alanine 22 to glycine 162 is removed by BMP1. A disordered region spans residues proline 60–proline 168. Residues asparagine 91 and asparagine 138 are each glycosylated (N-linked (GlcNAc...) asparagine). Tyrosine 181 bears the Sulfotyrosine mark. The segment at proline 207 to tyrosine 411 is lysyl-oxidase like. Cystine bridges form between cysteine 232–cysteine 238, cysteine 285–cysteine 334, cysteine 318–cysteine 324, cysteine 345–cysteine 355, and cysteine 392–cysteine 406. 3 residues coordinate Cu cation: histidine 286, histidine 288, and histidine 290. The segment at residues lysine 314 to tyrosine 349 is a cross-link (lysine tyrosylquinone (Lys-Tyr)). A 2',4',5'-topaquinone modification is found at tyrosine 349.

Belongs to the lysyl oxidase family. Interacts with MFAP4. Interacts (via propeptide) with EFEMP2; this interaction is strong and facilitates formation of ternary complexes with ELN during elastic fiber assembly; this interaction limits interaction of EFEMP2 with FBLN5. Requires Cu cation as cofactor. The cofactor is lysine tyrosylquinone residue. Post-translationally, the lysine tyrosylquinone cross-link (LTQ) is generated by condensation of the epsilon-amino group of a lysine with a topaquinone produced by oxidation of tyrosine. In terms of processing, proteolytically cleaved by BMP1 which removes the propeptide. Also proteolytically cleaved by ADAMTS2 and ADAMTS14, but not by ADAMTS3, at an additional cleavage site downstream of the BMP1 cleavage site. The propeptide plays a role in directing the deposition of this enzyme to elastic fibers, via interaction with tropoelastin. Cleavage by BMP1 to remove the propeptide does not increase enzymatic activity but increases binding to collagen. Cleavage by ADAMTS2 produces a form with reduced collagen-binding activity. Sulfated at Tyr-181 and also at either Tyr-177 or Tyr-178 which enhances binding to collagen. As to expression, aorta and lung.

It is found in the secreted. The protein resides in the extracellular space. The catalysed reaction is L-lysyl-[protein] + O2 + H2O = (S)-2-amino-6-oxohexanoyl-[protein] + H2O2 + NH4(+). Its function is as follows. Responsible for the post-translational oxidative deamination of peptidyl lysine residues in precursors to fibrous collagen and elastin. Regulator of Ras expression. May play a role in tumor suppression. Plays a role in the aortic wall architecture. This Rattus norvegicus (Rat) protein is Protein-lysine 6-oxidase.